We begin with the raw amino-acid sequence, 228 residues long: UPF0758 protein Gura_4138 (228 aa).

Residues 106–228 (RFTSPSQVFE…FLSFVDRGMM (123 aa)) form the MPN domain. Zn(2+) is bound by residues histidine 177, histidine 179, and aspartate 190. A JAMM motif motif is present at residues 177-190 (HNHPTGDPTPSRED).

Belongs to the UPF0758 family.

The polypeptide is UPF0758 protein Gura_4138 (Geotalea uraniireducens (strain Rf4) (Geobacter uraniireducens)).